A 466-amino-acid polypeptide reads, in one-letter code: Ribulose bisphosphate carboxylase large chain (466 aa).

K5 bears the N6,N6,N6-trimethyllysine mark. The substrate site is built by N114 and T164. The active-site Proton acceptor is K166. K168 contributes to the substrate binding site. Residues K192, D194, and E195 each coordinate Mg(2+). K192 is modified (N6-carboxylysine). The active-site Proton acceptor is H285. Substrate is bound by residues R286, H318, and S370.

This sequence belongs to the RuBisCO large chain family. Type I subfamily. As to quaternary structure, heterohexadecamer of 8 large chains and 8 small chains; disulfide-linked. The disulfide link is formed within the large subunit homodimers. The cofactor is Mg(2+). The disulfide bond which can form in the large chain dimeric partners within the hexadecamer appears to be associated with oxidative stress and protein turnover.

The protein localises to the plastid. It localises to the chloroplast. It catalyses the reaction 2 (2R)-3-phosphoglycerate + 2 H(+) = D-ribulose 1,5-bisphosphate + CO2 + H2O. The catalysed reaction is D-ribulose 1,5-bisphosphate + O2 = 2-phosphoglycolate + (2R)-3-phosphoglycerate + 2 H(+). In terms of biological role, ruBisCO catalyzes two reactions: the carboxylation of D-ribulose 1,5-bisphosphate, the primary event in carbon dioxide fixation, as well as the oxidative fragmentation of the pentose substrate in the photorespiration process. Both reactions occur simultaneously and in competition at the same active site. This is Ribulose bisphosphate carboxylase large chain from Isophysis tasmanica.